A 119-amino-acid chain; its full sequence is Iron-sulfur cluster insertion protein ErpA (119 aa).

Iron-sulfur cluster is bound by residues C47, C111, and C113.

The protein belongs to the HesB/IscA family. In terms of assembly, homodimer. It depends on iron-sulfur cluster as a cofactor.

Its function is as follows. Required for insertion of 4Fe-4S clusters for at least IspG. This chain is Iron-sulfur cluster insertion protein ErpA, found in Alcanivorax borkumensis (strain ATCC 700651 / DSM 11573 / NCIMB 13689 / SK2).